A 320-amino-acid chain; its full sequence is Aspartate carbamoyltransferase catalytic subunit (320 aa).

Residues Arg53 and Thr54 each contribute to the carbamoyl phosphate site. Lys82 contacts L-aspartate. Carbamoyl phosphate-binding residues include Arg103, His131, and Gln134. Positions 164 and 227 each coordinate L-aspartate. Positions 266 and 267 each coordinate carbamoyl phosphate.

Belongs to the aspartate/ornithine carbamoyltransferase superfamily. ATCase family. In terms of assembly, heterododecamer (2C3:3R2) of six catalytic PyrB chains organized as two trimers (C3), and six regulatory PyrI chains organized as three dimers (R2).

The catalysed reaction is carbamoyl phosphate + L-aspartate = N-carbamoyl-L-aspartate + phosphate + H(+). The protein operates within pyrimidine metabolism; UMP biosynthesis via de novo pathway; (S)-dihydroorotate from bicarbonate: step 2/3. In terms of biological role, catalyzes the condensation of carbamoyl phosphate and aspartate to form carbamoyl aspartate and inorganic phosphate, the committed step in the de novo pyrimidine nucleotide biosynthesis pathway. This Bifidobacterium longum subsp. infantis (strain ATCC 15697 / DSM 20088 / JCM 1222 / NCTC 11817 / S12) protein is Aspartate carbamoyltransferase catalytic subunit.